The sequence spans 523 residues: Ribosomal protein uS12 methylthiotransferase RimO (523 aa).

Residues 7 to 134 (RRVALITLGC…IATHLAAVLA (128 aa)) form the MTTase N-terminal domain. [4Fe-4S] cluster-binding residues include cysteine 16, cysteine 52, cysteine 97, cysteine 192, cysteine 196, and cysteine 199. The region spanning 178–409 (LTAGPVAVLK…DLVEQLTAAR (232 aa)) is the Radical SAM core domain. Residues 411 to 492 (DARIGSRVQV…GVDLIAEFIA (82 aa)) enclose the TRAM domain.

This sequence belongs to the methylthiotransferase family. RimO subfamily. It depends on [4Fe-4S] cluster as a cofactor.

The protein resides in the cytoplasm. The enzyme catalyses L-aspartate(89)-[ribosomal protein uS12]-hydrogen + (sulfur carrier)-SH + AH2 + 2 S-adenosyl-L-methionine = 3-methylsulfanyl-L-aspartate(89)-[ribosomal protein uS12]-hydrogen + (sulfur carrier)-H + 5'-deoxyadenosine + L-methionine + A + S-adenosyl-L-homocysteine + 2 H(+). Functionally, catalyzes the methylthiolation of an aspartic acid residue of ribosomal protein uS12. The chain is Ribosomal protein uS12 methylthiotransferase RimO from Frankia casuarinae (strain DSM 45818 / CECT 9043 / HFP020203 / CcI3).